The chain runs to 213 residues: MPVSEIMAGAALGLALQVLHDAIKKAKDRSLTTRCILDRLDATIFRITPLVTQVDKLSEEVEDSPRKVIEDLKHLLEKAVSLVEAYAELRRRNLLKKFRYKRRIKELEASLRWMVDVDVQVNQWVDIKELMAKMSEMNTKLDEITRQPTDCICFKSNHSTSQSSSQNIVEETDRSLEEIVECSSDGSKPKIDIHIHWSSRKRNKDREIRFVLK.

The 153-residue stretch at 1-153 folds into the RPW8 domain; sequence MPVSEIMAGA…ITRQPTDCIC (153 aa). The helical transmembrane segment at 7 to 23 threads the bilayer; it reads MAGAALGLALQVLHDAI. Coiled-coil stretches lie at residues 70–93 and 125–147; these read EDLKHLLEKAVSLVEAYAELRRRN and VDIKELMAKMSEMNTKLDEITRQ. N-linked (GlcNAc...) asparagine glycosylation occurs at Asn-157.

It belongs to the plant RPW8 protein family.

It is found in the membrane. Probable disease resistance (R) protein. This chain is RPW8-like protein 3, found in Arabidopsis thaliana (Mouse-ear cress).